A 384-amino-acid chain; its full sequence is MMKRIPAILVLEDGAYYKGWSFQQDKQEITIGEVVFNTGMTGYQEIITDPSYFHQIVAFTYPEIGNTGINNQDIESHSISIKGLIAKNICKISSSWREQQSLVKYLSSNNIPFIFGIDTRSLTQYLRQFGTMNGCISTDNLNHSYLKQKICEIPSMQGLDLIPHVTTRNVYPWDEKSFPNWYLTDNIRVHRVIQLKVIVIDFGVKLNILRRLATLGCQITVVPAHTPLKDILAYQPDGILLSNGPGDPSAVHYGIQTVTNLLDYNVPIFGICMGHQILNLALKAKTFKLKFGHRGINHPSGLNQQVEITSQNHGFAVELTSVFESPVRVTHFNLNDTTIAGTGHNQSPYFSVQYHPESSPGPHDADYLFESFIEIMTKSKNKVS.

The interval 1–192 (MMKRIPAILV…LTDNIRVHRV (192 aa)) is CPSase. Residues S51, G244, and G246 each coordinate L-glutamine. One can recognise a Glutamine amidotransferase type-1 domain in the interval 196–382 (KVIVIDFGVK…IEIMTKSKNK (187 aa)). Residue C272 is the Nucleophile of the active site. L-glutamine contacts are provided by M273, Q276, N312, G314, and F315. Catalysis depends on residues H355 and E357.

The protein belongs to the CarA family. Composed of two chains; the small (or glutamine) chain promotes the hydrolysis of glutamine to ammonia, which is used by the large (or ammonia) chain to synthesize carbamoyl phosphate. Tetramer of heterodimers (alpha,beta)4.

The protein localises to the plastid. The protein resides in the chloroplast. It carries out the reaction hydrogencarbonate + L-glutamine + 2 ATP + H2O = carbamoyl phosphate + L-glutamate + 2 ADP + phosphate + 2 H(+). The catalysed reaction is L-glutamine + H2O = L-glutamate + NH4(+). The protein operates within amino-acid biosynthesis; L-arginine biosynthesis; carbamoyl phosphate from bicarbonate: step 1/1. It participates in pyrimidine metabolism; UMP biosynthesis via de novo pathway; (S)-dihydroorotate from bicarbonate: step 1/3. Its function is as follows. Small subunit of the glutamine-dependent carbamoyl phosphate synthetase (CPSase). CPSase catalyzes the formation of carbamoyl phosphate from the ammonia moiety of glutamine, carbonate, and phosphate donated by ATP, constituting the first step of 2 biosynthetic pathways, one leading to arginine and/or urea and the other to pyrimidine nucleotides. The small subunit (glutamine amidotransferase) binds and cleaves glutamine to supply the large subunit with the substrate ammonia. This Pyropia yezoensis (Susabi-nori) protein is Carbamoyl phosphate synthase small chain.